Here is a 382-residue protein sequence, read N- to C-terminus: Mannitol-1-phosphate 5-dehydrogenase (382 aa).

A3–G14 contributes to the NAD(+) binding site.

The protein belongs to the mannitol dehydrogenase family.

It catalyses the reaction D-mannitol 1-phosphate + NAD(+) = beta-D-fructose 6-phosphate + NADH + H(+). This is Mannitol-1-phosphate 5-dehydrogenase from Erwinia tasmaniensis (strain DSM 17950 / CFBP 7177 / CIP 109463 / NCPPB 4357 / Et1/99).